The chain runs to 374 residues: Queuine tRNA-ribosyltransferase (374 aa).

The active-site Proton acceptor is the Asp91. Residues Asp91 to Tyr95, Asp145, Gln189, and Gly216 contribute to the substrate site. The tract at residues Gly247–Asp253 is RNA binding. Residue Asp266 is the Nucleophile of the active site. The segment at Thr271–Arg275 is RNA binding; important for wobble base 34 recognition. Residues Cys304, Cys306, Cys309, and His335 each contribute to the Zn(2+) site.

This sequence belongs to the queuine tRNA-ribosyltransferase family. In terms of assembly, homodimer. Within each dimer, one monomer is responsible for RNA recognition and catalysis, while the other monomer binds to the replacement base PreQ1. Zn(2+) serves as cofactor.

The catalysed reaction is 7-aminomethyl-7-carbaguanine + guanosine(34) in tRNA = 7-aminomethyl-7-carbaguanosine(34) in tRNA + guanine. It functions in the pathway tRNA modification; tRNA-queuosine biosynthesis. In terms of biological role, catalyzes the base-exchange of a guanine (G) residue with the queuine precursor 7-aminomethyl-7-deazaguanine (PreQ1) at position 34 (anticodon wobble position) in tRNAs with GU(N) anticodons (tRNA-Asp, -Asn, -His and -Tyr). Catalysis occurs through a double-displacement mechanism. The nucleophile active site attacks the C1' of nucleotide 34 to detach the guanine base from the RNA, forming a covalent enzyme-RNA intermediate. The proton acceptor active site deprotonates the incoming PreQ1, allowing a nucleophilic attack on the C1' of the ribose to form the product. After dissociation, two additional enzymatic reactions on the tRNA convert PreQ1 to queuine (Q), resulting in the hypermodified nucleoside queuosine (7-(((4,5-cis-dihydroxy-2-cyclopenten-1-yl)amino)methyl)-7-deazaguanosine). This Leptospira borgpetersenii serovar Hardjo-bovis (strain JB197) protein is Queuine tRNA-ribosyltransferase.